A 369-amino-acid polypeptide reads, in one-letter code: Glutamine synthetase (369 aa).

The 80-residue stretch at valine 23–glycine 102 folds into the GS beta-grasp domain. The GS catalytic domain occupies histidine 109–serine 369.

This sequence belongs to the glutamine synthetase family. As to quaternary structure, homooctamer.

It localises to the cytoplasm. The enzyme catalyses L-glutamate + NH4(+) + ATP = L-glutamine + ADP + phosphate + H(+). This Eremothecium gossypii (strain ATCC 10895 / CBS 109.51 / FGSC 9923 / NRRL Y-1056) (Yeast) protein is Glutamine synthetase (GLN1).